Consider the following 628-residue polypeptide: ATP-binding cassette sub-family F member 2 (628 aa).

Positions 1–57 (MPSDLAKKKAAKKKEAAKARQRPRKGHEENGDAVTEPQVAEEKIEEANGRETTGDGE) are disordered. The span at 40 to 53 (AEEKIEEANGRETT) shows a compositional bias: basic and acidic residues. ABC transporter domains are found at residues 91-330 (VHII…ENQM) and 401-618 (IMVQ…VDEE). ATP is bound at residue 123 to 130 (GLNGIGKS). A Phosphothreonine modification is found at threonine 223. Residue lysine 309 is modified to N6-acetyllysine. 435-442 (GPNGAGKS) lines the ATP pocket. Phosphoserine is present on serine 517.

This sequence belongs to the ABC transporter superfamily. ABCF family. EF3 subfamily.

The protein is ATP-binding cassette sub-family F member 2 of Mus musculus (Mouse).